We begin with the raw amino-acid sequence, 482 residues long: Malvidin galactosylase UGT88C3 (482 aa).

His16 serves as the catalytic Proton acceptor. Asp117 serves as the catalytic Charge relay. UDP contacts are provided by Ser279, Trp345, Ala349, His366, Asn370, Ser371, and Glu374.

Belongs to the UDP-glycosyltransferase family. As to expression, highly expressed in leaves, sheaths, pistils and embryos, observed in stems, stem nodes and panicles, and present at low levels in roots.

The protein resides in the endoplasmic reticulum. The protein localises to the nucleus. It carries out the reaction malvidin + UDP-alpha-D-galactose = malvidin 3-O-beta-D-galactoside + UDP + H(+). The protein operates within pigment biosynthesis; anthocyanin biosynthesis. UDP-glycosyltransferase which uses UDP-galactose and malvidin as substrates to catalyze the biosynthesis of malvidin 3-O-galactoside, an anthocyanin conferring purple pigmentation. The polypeptide is Malvidin galactosylase UGT88C3 (Oryza sativa subsp. japonica (Rice)).